Here is a 405-residue protein sequence, read N- to C-terminus: S-adenosylmethionine synthase (405 aa).

139 to 144 (GQGSVD) contributes to the ATP binding site.

The protein belongs to the AdoMet synthase 2 family. Mg(2+) is required as a cofactor.

It carries out the reaction L-methionine + ATP + H2O = S-adenosyl-L-methionine + phosphate + diphosphate. It participates in amino-acid biosynthesis; S-adenosyl-L-methionine biosynthesis; S-adenosyl-L-methionine from L-methionine: step 1/1. Its function is as follows. Catalyzes the formation of S-adenosylmethionine from methionine and ATP. The polypeptide is S-adenosylmethionine synthase (Thermococcus gammatolerans (strain DSM 15229 / JCM 11827 / EJ3)).